Reading from the N-terminus, the 346-residue chain is Putative [LysW]-L-2-aminoadipate/[LysW]-L-glutamate phosphate reductase (346 aa).

NADP(+) is bound at residue 12-15 (SGFT). The active site involves cysteine 147. The interval 178–198 (GSSEGGAGGGDASSHPERSGV) is disordered. Asparagine 310 contributes to the NADP(+) binding site.

The protein belongs to the NAGSA dehydrogenase family. Type 1 subfamily. LysY sub-subfamily.

The protein resides in the cytoplasm. It carries out the reaction [amino-group carrier protein]-C-terminal-N-(1-carboxy-5-oxopentan-1-yl)-L-glutamine + phosphate + NADP(+) = [amino-group carrier protein]-C-terminal-N-(1-carboxy-5-phosphooxy-5-oxopentan-1-yl)-L-glutamine + NADPH + H(+). The enzyme catalyses [amino-group carrier protein]-C-terminal-gamma-(L-glutamyl-5-semialdehyde)-L-glutamate + phosphate + NADP(+) = [amino-group carrier protein]-C-terminal-gamma-(5-phospho-L-glutamyl)-L-glutamate + NADPH + H(+). The protein operates within amino-acid biosynthesis; L-lysine biosynthesis via AAA pathway; L-lysine from L-alpha-aminoadipate (Thermus route): step 3/5. It functions in the pathway amino-acid biosynthesis; L-arginine biosynthesis. Involved in both the arginine and lysine biosynthetic pathways. This is Putative [LysW]-L-2-aminoadipate/[LysW]-L-glutamate phosphate reductase from Haloquadratum walsbyi (strain DSM 16790 / HBSQ001).